Here is a 587-residue protein sequence, read N- to C-terminus: MLCLSLNSSSTSPPKSPLHHSFSRRSMRSWVCSPRVQRKKLGFWSSPKAVLSAVSGAGSEAGKVEEAEEYDAIVIGSGIGGLVAATQLAVKGARVLVLEKYVIPGGSSGFFQRDGFTFDVGSSVMFGFSDKGNLNLITQALEAVDCKLRTIPDPTTVHFHLPDNLSIRVHREYDMFISELVNYFPHEKEGIRRFYNECWKIFNSLNSLELKSLEEPMYLFGQFFRKPVECLTLAYYLPQNAGDIARKFIKDPQLLSFIDAECFIVSTVKALHTPMINASMVLCDRHFGGINYPVGGVGGIAKALANGLVNKGSKLLYKANVTKILLKDGKAVGVKLSNGREFFAKTVISNATRWDTFGKLLKVEDIPQEEKNFKKIYLKAPSFLSIHMGVKAFVLPPDTDCHHFILEDNWGRLELPYGSIFLSIPTVLDPSLAPEGHHIFHIFTTSSIENWEGLSHKEYEEKKELVADEIITRLEKKLFPGLKDSVVLKEVGTPKTHRRFLARDSGTYGPMPRKVPKGLLGMPFNTTAINGLYCVGDSCFPGQGVIAVAFSGVMCAHRVAADLGIEKKAPVLDAALLRLLGWLRTVA.

Positions 1 to 13 (MLCLSLNSSSTSP) are enriched in low complexity. The segment at 1–21 (MLCLSLNSSSTSPPKSPLHHS) is disordered. The N-terminal 50 residues, 1-50 (MLCLSLNSSSTSPPKSPLHHSFSRRSMRSWVCSPRVQRKKLGFWSSPKAV), are a transit peptide targeting the chloroplast.

It belongs to the carotenoid/retinoid oxidoreductase family. CrtISO subfamily. It depends on NAD(+) as a cofactor. NADP(+) serves as cofactor. The cofactor is FAD. As to expression, up-regulated in the flower buds and flower lip tissue, while it is weakly expressed in leaves.

The protein resides in the plastid. The protein localises to the chloroplast membrane. The catalysed reaction is 7,7',9,9'-tetra-cis-lycopene = all-trans-lycopene. The protein operates within carotenoid biosynthesis; lycopene biosynthesis. Functionally, carotene cis-trans-isomerase that converts 7,9,9'-tri-cis-neurosporene to 9'-cis-neurosporene and 7,9,9',7'-tetra-cis-lycopene (also known as prolycopene) into all-trans-lycopene. Isomerization requires redox-active components, suggesting that isomerization is achieved by a reversible redox reaction acting at specific double bonds. Isomerizes adjacent cis-double bonds at C7 and C9 pairwise into the trans-configuration, but is incapable of isomerizing single cis-double bonds at C9 and C9'. The protein is Prolycopene isomerase 1, chloroplastic (CRTISO1) of Oncidium hybrid cultivar (Orchid).